Reading from the N-terminus, the 361-residue chain is DNA replication and repair protein RecF (361 aa).

An ATP-binding site is contributed by 30–37 (GDNAQGKT).

The protein belongs to the RecF family.

It is found in the cytoplasm. In terms of biological role, the RecF protein is involved in DNA metabolism; it is required for DNA replication and normal SOS inducibility. RecF binds preferentially to single-stranded, linear DNA. It also seems to bind ATP. In Clostridium botulinum (strain Eklund 17B / Type B), this protein is DNA replication and repair protein RecF.